Consider the following 383-residue polypeptide: Probable mannan endo-1,4-beta-mannosidase A (383 aa).

A signal peptide spans 1 to 21 (MKLSNALLTLASLALANVSTA). N-linked (GlcNAc...) asparagine glycosylation is present at N17. W92 lines the substrate pocket. Residue N194 is glycosylated (N-linked (GlcNAc...) asparagine). N205 serves as a coordination point for substrate. The active-site Proton donor is the E206. Residue N263 is glycosylated (N-linked (GlcNAc...) asparagine). Position 281 (Y281) interacts with substrate. Catalysis depends on E314, which acts as the Nucleophile. W344 is a substrate binding site.

The protein belongs to the glycosyl hydrolase 5 (cellulase A) family.

Its subcellular location is the secreted. It carries out the reaction Random hydrolysis of (1-&gt;4)-beta-D-mannosidic linkages in mannans, galactomannans and glucomannans.. Functionally, endo-1,4-mannanase, a crucial enzyme for depolymerization of seed galactomannans and wood galactoglucomannans. The protein is Probable mannan endo-1,4-beta-mannosidase A (manA) of Aspergillus niger (strain ATCC MYA-4892 / CBS 513.88 / FGSC A1513).